The chain runs to 747 residues: Fatty acid oxidation complex subunit alpha (747 aa).

The interval 1–197 is enoyl-CoA hydratase; sequence MGASATNSVT…KMGLVDDVVP (197 aa). A 3-hydroxyacyl-CoA dehydrogenase region spans residues 313–747; the sequence is RAIHRVGVLG…NIDEVTDVAS (435 aa). The interval 590 to 614 is disordered; it reads YLYSNPTKNSSPTKNGNSPAKRNSF. Residues 593–610 are compositionally biased toward polar residues; the sequence is SNPTKNSSPTKNGNSPAK.

In the N-terminal section; belongs to the enoyl-CoA hydratase/isomerase family. It in the central section; belongs to the 3-hydroxyacyl-CoA dehydrogenase family. As to quaternary structure, heterotetramer of two alpha chains (FadJ) and two beta chains (FadI).

It localises to the cytoplasm. It catalyses the reaction a (3S)-3-hydroxyacyl-CoA = a (2E)-enoyl-CoA + H2O. It carries out the reaction a 4-saturated-(3S)-3-hydroxyacyl-CoA = a (3E)-enoyl-CoA + H2O. The enzyme catalyses a (3S)-3-hydroxyacyl-CoA + NAD(+) = a 3-oxoacyl-CoA + NADH + H(+). The catalysed reaction is (3S)-3-hydroxybutanoyl-CoA = (3R)-3-hydroxybutanoyl-CoA. It functions in the pathway lipid metabolism; fatty acid beta-oxidation. Its function is as follows. Catalyzes the formation of a hydroxyacyl-CoA by addition of water on enoyl-CoA. Also exhibits 3-hydroxyacyl-CoA epimerase and 3-hydroxyacyl-CoA dehydrogenase activities. The chain is Fatty acid oxidation complex subunit alpha from Yersinia pseudotuberculosis serotype O:1b (strain IP 31758).